Consider the following 352-residue polypeptide: Matrix protein (352 aa).

The segment at 1-22 (MEPDIKSISSESMEGVSDFSPS) is disordered. Positions 106–115 (LLEELCSLKV) match the Nuclear export signal 1 motif. The short motif at 244-258 (RRAGKYYSVDYCRRK) is the Nuclear localization signal element. A Nuclear export signal 2 motif is present at residues 268 to 276 (LGSIGGLSL).

This sequence belongs to the morbillivirus/respirovirus/rubulavirus M protein family. As to quaternary structure, homomultimer. Interacts with host TRIM6; this interaction inhibits the IKBKE-dependent activation of the type I interferon signaling pathway. Interacts with host ANP32B; this interaction promotes M nuclear localization. In terms of processing, ubiquitinated; regulates matrix nuclear export.

It localises to the virion. Its subcellular location is the host cytoplasm. The protein resides in the host cell membrane. It is found in the host nucleus. Functionally, plays a crucial role in virion assembly and budding. Forms a shell at the inner face of the plasma membrane. Transits through the host nucleus before gaining the functional ability to localize and bud from the plasma membrane. Mediates together with fusion protein the incorporation of the glycoprotein to the viral particles. Also participates in the inhibition of the host interferon type I antiviral response by interacting with and thereby inhibiting host TRIM6. This is Matrix protein (M) from Cynopterus brachyotis (Lesser short-nosed fruit bat).